A 396-amino-acid polypeptide reads, in one-letter code: 1-deoxy-D-xylulose 5-phosphate reductoisomerase (396 aa).

Residues threonine 13, glycine 14, serine 15, isoleucine 16, and asparagine 127 each coordinate NADPH. A 1-deoxy-D-xylulose 5-phosphate-binding site is contributed by lysine 128. Glutamate 129 lines the NADPH pocket. Aspartate 153 contacts Mn(2+). Residues serine 154, glutamate 155, serine 184, and histidine 207 each coordinate 1-deoxy-D-xylulose 5-phosphate. Glutamate 155 is a binding site for Mn(2+). Glycine 213 serves as a coordination point for NADPH. Serine 220, asparagine 225, lysine 226, and glutamate 229 together coordinate 1-deoxy-D-xylulose 5-phosphate. Glutamate 229 serves as a coordination point for Mn(2+).

It belongs to the DXR family. Mg(2+) is required as a cofactor. The cofactor is Mn(2+).

It carries out the reaction 2-C-methyl-D-erythritol 4-phosphate + NADP(+) = 1-deoxy-D-xylulose 5-phosphate + NADPH + H(+). The protein operates within isoprenoid biosynthesis; isopentenyl diphosphate biosynthesis via DXP pathway; isopentenyl diphosphate from 1-deoxy-D-xylulose 5-phosphate: step 1/6. In terms of biological role, catalyzes the NADPH-dependent rearrangement and reduction of 1-deoxy-D-xylulose-5-phosphate (DXP) to 2-C-methyl-D-erythritol 4-phosphate (MEP). The polypeptide is 1-deoxy-D-xylulose 5-phosphate reductoisomerase (Stutzerimonas stutzeri (strain A1501) (Pseudomonas stutzeri)).